We begin with the raw amino-acid sequence, 2477 residues long: MSLNTEHSKGDLRLLFGPQCSEIEDSIAHIRDAVYKDSAGLGFLSDILDELPSLWPVITSAWPALRKVQGEKQLAALGRRFENGSPDSEAEPSSLIMTPVTVMKHLVDFWNLQNVATHPAFPSSPLSRTTAPRIIDSQGFCVGILAAIAVACSQDTREFQSLASNAIRLAVCIGALVDFDEIVSGKAKSIAVRWETPADHDYLEQTLTKSPNVYISCYTDVNSVTITIPGDTAQRVKFKQELSGRGLHTKPIPLQGRFHHQQTHREGIQHIMNLCVKDPRFQLPHSNALILPLRSSHNGQVLINAAMLHTVALESILSVKADWWGTVSALLNSADMEVDESRLLSIGQEEFVPRSARGRLVARSNLDVYGAGVFANGNTSARSAVSLQNGTNTLNGSPQAAEMPPIAITGMACRYSNADTTSELWDLLELGVCTVEKAPGNRFRMPDLQREPKGPFWGHFLDRPDAFDHRFFNISAREAESMDPQQRVLLQVAYEAMESAGYCGWQHTELSDEIGCYVGVGSEDYTENVASRNANAFSATGTLQSFIAGRISHHFGWSGPSITLDTACSSAAVAIHMACKALQTKECSIAVAGGVNILTNPRVYQNLAAASFLSSTGACKSFDVSADGYCRGEGAGLVVLRPLQDAIDNGDPILGVIAGSVVNQGSNRSPITVPDAESQRSLYRKALSLAGVAPDEVTYVEAHGTGTQVGDPIELESLRKAFGNPLRSQSLHVGSIKGNIGHTETSSGVAGLLKTILMLQKQRIPKQANFRQLNPKVMPPLENDRLVIPVESTKWASARRVAMVSNYGASGSNAALIVRDHTPSLSGQGKAMAEYIRDMPILISARSEESIRAYCGALRTTLLRHPYSNTVVRELAYNVAMKQNRTLPFTLTFSTSSDPTSLSTRLEAIAAGKSADIIQKRESNEPPIVLCFGGQNGVTSSISQELYDSCVLLQTHLMACEQAGQKLGLPSLFPTIFTSDPIVNTVYLHFMLFSIQYASARAWIDSGLRVDRIVGHSFGQLTALSVAGSLSVQEGIRLVTERARLIQSNWGPESGVMLAVEGTQAEVQRVLEQTGHRAEIACYNGPQQQVLAGTGECIRAVEDALATNPLTSNVRVRRLENSHAFHSRLVDSIVPGLTELAESFVYQAPAIPIEACSATGDWSIVTPAKIVEHSRMPVHFQRAVERIAQKLQVPAVWLEAGSASPIIPMVRRVLEKSSATHTYHRVNLDGSDGSGNLATVTSALWGQGVHVQFWPFHHSQRGTFGWMNLPPYQFAKNRHWVDFDPTAFSFSGSSAEPQCGSQERAGLLRKLSDGPEEYLFAVNTQDVLYRSCTKGHAVLDQTLCPASMYMEMVLRAATSVFTLGESSTLTMSHIEDLVISSPLVLDPQGSVFVRLIPEAVASSQTWSFSIFSSSGTGNESSIHATGSVSLCNERSRALSHFQSMNRLMDPARARGIEDHLASNGLKGSTVYSALEQVTNYADYFRGVRQVFANGREAAGLVSMAPSATETTCNPILLDNFLQVAGIHVNCLSGREAEEVFVCNAIGETYVSDSLFKKEDGAIPLSWKVYTNYVRPSKNEIVCDIYVMNSQGDGLTAAIMGVRFMSVSIRSLTRALAKLNNNFPDVPQLPPTIQPAIVTADYDEASDNVNVDSDLVAVQEMLCELFGVSVEEVSPSVSLIDIGVDSLISTEVLSEIKRRFHKDISYSTLVDIPNIQGLTEHIFPGHSHLAPSQIVIKPVRQQTVIPQTVTSLPVPANAGPSLVSVAHQCFYETHAAVSHTHNADWAGFFNAIYPQQMTLITAYILEAFRALGSPLESSQADEVLPIISVLPRHEQLKKHLYTILESVNLVRQTPTGQLVRTATPISPLSSHALHAQIRDEHPPYALEHDLLQITGSRLAECLTGQADGVSLIFQDSQTRRLVGDVYTDSPVFKSGNLYLAQYLTDVIQTLGNGRQVKILEIGAGTGGTTKNLLEQLSALPGMATRMEYTFTDISPSLVAAARKKFSKYDFVRYETINVESSPPSLLHGQYDIVLSTNCVHATRNLVESCSNIRKLLRPDGILCLVELTRDIFWLDLVFGLLEGWWRFEDGRKHALATEDLWDQTLRQSGFEWVGWTNNEAVESNALRVIVASPTKAPSALEICSKPANMETVVWGERNGLQLLADIFYPDVVDTTQKRRACALMVHGGGHVMLSRKDIRPAQTQTLLDAGFLPISVDYRLCPEVSLSEGPMADVRDALGWVRRILPNIPLLRPDIRPDGNQVVAIGWSTGGHLAMTLAFTAPAVGIAAPEAILAFYCPTDYEDPFWSRPNFPFGQTVASNDIEYDVWEGVQSAPIKGYNPAFKERPLGGWMSTSDPRSRIALHMNWTGQTLPVLLGGMHKEFRIPDELPRPTDEEIQAVSPNYQIRIGRYRTPTFMVHGTSDDLVPCAQTESTYNALTQNGIEADIRVVQGAIEVLLYLQHPERARKWICSGSLTLEI.

Residues 14 to 269 are N-terminal acylcarrier protein transacylase domain (SAT); it reads LLFGPQCSEI…HQQTHREGIQ (256 aa). In terms of domain architecture, Ketosynthase family 3 (KS3) spans 403–820; sequence MPPIAITGMA…GSNAALIVRD (418 aa). Catalysis depends on for beta-ketoacyl synthase activity residues Cys568, His703, and His742. Residues 930–1233 form a malonyl-CoA:ACP transacylase (MAT) domain region; that stretch reads LCFGGQNGVT…HRVNLDGSDG (304 aa). Ser1017 functions as the For acyl/malonyl transferase activity in the catalytic mechanism. The N-terminal hotdog fold stretch occupies residues 1302-1435; that stretch reads QERAGLLRKL…GSVSLCNERS (134 aa). The region spanning 1302–1612 is the PKS/mFAS DH domain; that stretch reads QERAGLLRKL…FMSVSIRSLT (311 aa). The segment at 1307–1611 is product template (PT) domain; the sequence is LLRKLSDGPE…RFMSVSIRSL (305 aa). His1336 serves as the catalytic Proton acceptor; for dehydratase activity. Positions 1461–1612 are C-terminal hotdog fold; it reads ASNGLKGSTV…FMSVSIRSLT (152 aa). The active-site Proton donor; for dehydratase activity is the Asp1518. The Carrier domain maps to 1651-1725; it reads DSDLVAVQEM…GLTEHIFPGH (75 aa). Position 1685 is an O-(pantetheine 4'-phosphoryl)serine (Ser1685). The methyltransferase (CMeT) domain stretch occupies residues 1882-2117; that stretch reads PYALEHDLLQ…GFEWVGWTNN (236 aa). Catalysis depends on for thioesterase activity residues Ser2267 and Asp2421.

The protein resides in the cytoplasm. It is found in the cytosol. It carries out the reaction 3 malonyl-CoA + acetyl-CoA + S-adenosyl-L-methionine + H(+) = 5-methylorsellinate + S-adenosyl-L-homocysteine + 3 CO2 + 4 CoA. Its pathway is secondary metabolite biosynthesis; terpenoid biosynthesis. Functionally, non-reducing polyketide synthase; part of the gene cluster that mediates the biosynthesis of mycophenolic acid (MPA), the first isolated antibiotic natural product in the world obtained from a culture of Penicillium brevicompactum in 1893. MpaC catalyzes the synthesis of 5-methylorsellinic acid (5MOA) via the condensation of 1 acetyl-CoA starter unit with 3 malonyl-CoA units and one methylation step. The first step of the pathway is the synthesis of 5-methylorsellinic acid (5MOA) by the cytosolic polyketide synthase mpaC. 5MOA is then converted to the phthalide compound 5,7-dihydroxy-4,6-dimethylphthalide (DHMP) by the endoplasmic reticulum-bound cytochrome P450 monooxygenase mpaDE. MpaDE first catalyzes hydroxylation of 5-MOA to 4,6-dihydroxy-2-(hydroxymethyl)-3-methylbenzoic acid (DHMB). MpaDE then acts as a lactone synthase that catalyzes the ring closure to convert DHMB into DHMP. The next step is the prenylation of DHMP by the Golgi apparatus-associated prenyltransferase mpaA to yield farnesyl-DHMP (FDHMP). The ER-bound oxygenase mpaB then mediates the oxidative cleavage the C19-C20 double bond in FDHMP to yield FDHMP-3C via a mycophenolic aldehyde intermediate. The O-methyltransferase mpaG catalyzes the methylation of FDHMP-3C to yield MFDHMP-3C. After the cytosolic methylation of FDHMP-3C, MFDHMP-3C enters into peroxisomes probably via free diffusion due to its low molecular weight. Upon a peroxisomal CoA ligation reaction, catalyzed by a beta-oxidation component enzyme acyl-CoA ligase ACL891, MFDHMP-3C-CoA would then be restricted to peroxisomes for the following beta-oxidation pathway steps. The peroxisomal beta-oxidation machinery than converts MFDHMP-3C-CoA into MPA_CoA, via a beta-oxidation chain-shortening process. Finally mpaH acts as a peroxisomal acyl-CoA hydrolase with high substrate specificity toward MPA-CoA to release the final product MPA. This Penicillium roqueforti (strain FM164) protein is Non-reducing polyketide synthase mapC.